A 382-amino-acid chain; its full sequence is Galactokinase (382 aa).

34–37 contacts substrate; that stretch reads EHTD. Residue 124 to 130 participates in ATP binding; it reads GAGLSSS. Mg(2+) is bound by residues Ser-130 and Glu-162. The active-site Proton acceptor is the Asp-174. Tyr-223 is a binding site for substrate.

Belongs to the GHMP kinase family. GalK subfamily.

It localises to the cytoplasm. The enzyme catalyses alpha-D-galactose + ATP = alpha-D-galactose 1-phosphate + ADP + H(+). It functions in the pathway carbohydrate metabolism; galactose metabolism. In terms of biological role, catalyzes the transfer of the gamma-phosphate of ATP to D-galactose to form alpha-D-galactose-1-phosphate (Gal-1-P). This Citrobacter koseri (strain ATCC BAA-895 / CDC 4225-83 / SGSC4696) protein is Galactokinase.